Consider the following 296-residue polypeptide: Fructose-bisphosphate aldolase class 1 (296 aa).

The Proton acceptor role is filled by E175. Residue K212 is the Schiff-base intermediate with dihydroxyacetone-P of the active site.

It belongs to the class I fructose-bisphosphate aldolase family.

It carries out the reaction beta-D-fructose 1,6-bisphosphate = D-glyceraldehyde 3-phosphate + dihydroxyacetone phosphate. It participates in carbohydrate degradation; glycolysis; D-glyceraldehyde 3-phosphate and glycerone phosphate from D-glucose: step 4/4. This chain is Fructose-bisphosphate aldolase class 1, found in Staphylococcus aureus (strain MRSA252).